Reading from the N-terminus, the 302-residue chain is Recombination-associated protein RdgC (302 aa).

It belongs to the RdgC family.

The protein localises to the cytoplasm. It is found in the nucleoid. Its function is as follows. May be involved in recombination. This chain is Recombination-associated protein RdgC, found in Mannheimia succiniciproducens (strain KCTC 0769BP / MBEL55E).